The primary structure comprises 203 residues: Non-specific lipid transfer protein GPI-anchored 20 (203 aa).

The first 21 residues, 1–21 (MSKIISLVVAMIAVLALPIRG), serve as a signal peptide directing secretion. Disulfide bonds link Cys-29–Cys-74, Cys-40–Cys-58, Cys-59–Cys-99, and Cys-72–Cys-108. Residues Asn-46, Asn-50, and Asn-88 are each glycosylated (N-linked (GlcNAc...) asparagine). The interval 119-182 (GPAATFGPSM…TSRPSETPSS (64 aa)) is disordered. Composition is skewed to polar residues over residues 144 to 156 (AAQT…TRPF) and 169 to 179 (DGGSTSRPSET). Ser-172 carries the GPI-anchor amidated serine lipid modification. Positions 173–203 (TSRPSETPSSAYALSPSLLFFSIALVALKFY) are cleaved as a propeptide — removed in mature form.

Belongs to the plant LTP family. Expressed in seedlings, preferentially in hypocotyls and roots. Also observed in siliques and sepals.

The protein localises to the cell membrane. Its function is as follows. Probable lipid transfer protein. The protein is Non-specific lipid transfer protein GPI-anchored 20 of Arabidopsis thaliana (Mouse-ear cress).